Here is a 582-residue protein sequence, read N- to C-terminus: Probable DNA ligase (582 aa).

An ATP-binding site is contributed by Glu243. The active-site N6-AMP-lysine intermediate is Lys245. The ATP site is built by Arg250, Arg265, Glu295, Phe335, Arg410, and Lys416.

The protein belongs to the ATP-dependent DNA ligase family. The cofactor is Mg(2+).

The enzyme catalyses ATP + (deoxyribonucleotide)n-3'-hydroxyl + 5'-phospho-(deoxyribonucleotide)m = (deoxyribonucleotide)n+m + AMP + diphosphate.. Its function is as follows. DNA ligase that seals nicks in double-stranded DNA during DNA replication, DNA recombination and DNA repair. In Dictyoglomus turgidum (strain DSM 6724 / Z-1310), this protein is Probable DNA ligase.